The primary structure comprises 151 residues: Putative pre-16S rRNA nuclease (151 aa).

This sequence belongs to the YqgF nuclease family.

The protein resides in the cytoplasm. Could be a nuclease involved in processing of the 5'-end of pre-16S rRNA. The polypeptide is Putative pre-16S rRNA nuclease (Gloeothece citriformis (strain PCC 7424) (Cyanothece sp. (strain PCC 7424))).